The following is a 305-amino-acid chain: Acetaldehyde dehydrogenase (305 aa).

Position 13 to 16 (13 to 16 (SGNI)) interacts with NAD(+). Catalysis depends on Cys-128, which acts as the Acyl-thioester intermediate. NAD(+) contacts are provided by residues 159–167 (SAGPGTRQN) and Asn-278.

The protein belongs to the acetaldehyde dehydrogenase family.

It catalyses the reaction acetaldehyde + NAD(+) + CoA = acetyl-CoA + NADH + H(+). In Roseiflexus castenholzii (strain DSM 13941 / HLO8), this protein is Acetaldehyde dehydrogenase.